The chain runs to 102 residues: Large ribosomal subunit protein bL21 (102 aa).

The protein belongs to the bacterial ribosomal protein bL21 family. Part of the 50S ribosomal subunit. Contacts protein L20.

Its function is as follows. This protein binds to 23S rRNA in the presence of protein L20. The protein is Large ribosomal subunit protein bL21 of Listeria monocytogenes serotype 4b (strain F2365).